Here is a 171-residue protein sequence, read N- to C-terminus: Ribosome maturation factor RimM (171 aa).

The 74-residue stretch at 97-170 folds into the PRC barrel domain; the sequence is EGEYYYHEII…LVTIHVMEGL (74 aa).

It belongs to the RimM family. In terms of assembly, binds ribosomal protein uS19.

It is found in the cytoplasm. Functionally, an accessory protein needed during the final step in the assembly of 30S ribosomal subunit, possibly for assembly of the head region. Essential for efficient processing of 16S rRNA. May be needed both before and after RbfA during the maturation of 16S rRNA. It has affinity for free ribosomal 30S subunits but not for 70S ribosomes. The polypeptide is Ribosome maturation factor RimM (Bacillus cereus (strain ATCC 14579 / DSM 31 / CCUG 7414 / JCM 2152 / NBRC 15305 / NCIMB 9373 / NCTC 2599 / NRRL B-3711)).